Reading from the N-terminus, the 341-residue chain is DNA-directed RNA polymerase subunit alpha (341 aa).

The segment at 1 to 237 (MLSLSKNWNA…EQLQLFISFE (237 aa)) is alpha N-terminal domain (alpha-NTD). Residues 247-341 (TDALPFSPYL…LSKRYEDSYN (95 aa)) form an alpha C-terminal domain (alpha-CTD) region.

The protein belongs to the RNA polymerase alpha chain family. As to quaternary structure, homodimer. The RNAP catalytic core consists of 2 alpha, 1 beta, 1 beta' and 1 omega subunit. When a sigma factor is associated with the core the holoenzyme is formed, which can initiate transcription.

The enzyme catalyses RNA(n) + a ribonucleoside 5'-triphosphate = RNA(n+1) + diphosphate. Functionally, DNA-dependent RNA polymerase catalyzes the transcription of DNA into RNA using the four ribonucleoside triphosphates as substrates. The polypeptide is DNA-directed RNA polymerase subunit alpha (Rickettsia bellii (strain RML369-C)).